A 65-amino-acid chain; its full sequence is Protein TrbD (65 aa).

This is Protein TrbD (trbD) from Escherichia coli (strain K12).